The primary structure comprises 384 residues: Dual-specificity RNA methyltransferase RlmN (384 aa).

Catalysis depends on Glu-105, which acts as the Proton acceptor. Residues 111-350 form the Radical SAM core domain; sequence EDDRATLCVS…TIVRKTRGDD (240 aa). An intrachain disulfide couples Cys-118 to Cys-355. 3 residues coordinate [4Fe-4S] cluster: Cys-125, Cys-129, and Cys-132. Residues 179–180, Ser-211, 233–235, and Asn-312 contribute to the S-adenosyl-L-methionine site; these read GE and SLH. Cys-355 acts as the S-methylcysteine intermediate in catalysis.

It belongs to the radical SAM superfamily. RlmN family. [4Fe-4S] cluster serves as cofactor.

Its subcellular location is the cytoplasm. It catalyses the reaction adenosine(2503) in 23S rRNA + 2 reduced [2Fe-2S]-[ferredoxin] + 2 S-adenosyl-L-methionine = 2-methyladenosine(2503) in 23S rRNA + 5'-deoxyadenosine + L-methionine + 2 oxidized [2Fe-2S]-[ferredoxin] + S-adenosyl-L-homocysteine. The enzyme catalyses adenosine(37) in tRNA + 2 reduced [2Fe-2S]-[ferredoxin] + 2 S-adenosyl-L-methionine = 2-methyladenosine(37) in tRNA + 5'-deoxyadenosine + L-methionine + 2 oxidized [2Fe-2S]-[ferredoxin] + S-adenosyl-L-homocysteine. Its function is as follows. Specifically methylates position 2 of adenine 2503 in 23S rRNA and position 2 of adenine 37 in tRNAs. m2A2503 modification seems to play a crucial role in the proofreading step occurring at the peptidyl transferase center and thus would serve to optimize ribosomal fidelity. This Shigella flexneri serotype 5b (strain 8401) protein is Dual-specificity RNA methyltransferase RlmN.